Consider the following 199-residue polypeptide: Probable septum site-determining protein MinC (199 aa).

Belongs to the MinC family. In terms of assembly, interacts with MinD and FtsZ.

Functionally, cell division inhibitor that blocks the formation of polar Z ring septums. Rapidly oscillates between the poles of the cell to destabilize FtsZ filaments that have formed before they mature into polar Z rings. Prevents FtsZ polymerization. In Persephonella marina (strain DSM 14350 / EX-H1), this protein is Probable septum site-determining protein MinC.